Reading from the N-terminus, the 356-residue chain is UDP-3-O-acylglucosamine N-acyltransferase (356 aa).

His-251 (proton acceptor) is an active-site residue.

It belongs to the transferase hexapeptide repeat family. LpxD subfamily. In terms of assembly, homotrimer.

The catalysed reaction is a UDP-3-O-[(3R)-3-hydroxyacyl]-alpha-D-glucosamine + a (3R)-hydroxyacyl-[ACP] = a UDP-2-N,3-O-bis[(3R)-3-hydroxyacyl]-alpha-D-glucosamine + holo-[ACP] + H(+). The protein operates within bacterial outer membrane biogenesis; LPS lipid A biosynthesis. Catalyzes the N-acylation of UDP-3-O-acylglucosamine using 3-hydroxyacyl-ACP as the acyl donor. Is involved in the biosynthesis of lipid A, a phosphorylated glycolipid that anchors the lipopolysaccharide to the outer membrane of the cell. The polypeptide is UDP-3-O-acylglucosamine N-acyltransferase (Ralstonia nicotianae (strain ATCC BAA-1114 / GMI1000) (Ralstonia solanacearum)).